The sequence spans 410 residues: Porin-like protein GalP (410 aa).

Residues 1–25 (MKCRTLYPLVPTFALAASLPLQALA) form the signal peptide.

It belongs to the outer membrane porin (Opr) (TC 1.B.25) family.

Functionally, probable transporter, possibly involved in the gallate degradation pathway. May play a role in the uptake of low gallate concentrations that may exist in the natural habitats of P.putida. This chain is Porin-like protein GalP (galP), found in Pseudomonas putida (strain ATCC 47054 / DSM 6125 / CFBP 8728 / NCIMB 11950 / KT2440).